A 396-amino-acid polypeptide reads, in one-letter code: S-adenosylmethionine synthase (396 aa).

ATP is bound at residue His16. Asp18 is a binding site for Mg(2+). Position 44 (Glu44) interacts with K(+). L-methionine is bound by residues Glu57 and Gln100. A flexible loop region spans residues 100–110 (QSVDINQGVDR). ATP-binding positions include 165–167 (DAK), Asp240, 246–247 (RK), Ala263, and Lys267. Asp240 contacts L-methionine. Lys271 contacts L-methionine.

Belongs to the AdoMet synthase family. In terms of assembly, homotetramer; dimer of dimers. Mg(2+) serves as cofactor. Requires K(+) as cofactor.

Its subcellular location is the cytoplasm. It catalyses the reaction L-methionine + ATP + H2O = S-adenosyl-L-methionine + phosphate + diphosphate. The protein operates within amino-acid biosynthesis; S-adenosyl-L-methionine biosynthesis; S-adenosyl-L-methionine from L-methionine: step 1/1. Catalyzes the formation of S-adenosylmethionine (AdoMet) from methionine and ATP. The overall synthetic reaction is composed of two sequential steps, AdoMet formation and the subsequent tripolyphosphate hydrolysis which occurs prior to release of AdoMet from the enzyme. The sequence is that of S-adenosylmethionine synthase from Pseudomonas aeruginosa (strain UCBPP-PA14).